The chain runs to 444 residues: UDP-N-acetylmuramate--L-alanine ligase (444 aa).

110–116 (GAHGKTS) is an ATP binding site.

The protein belongs to the MurCDEF family.

It is found in the cytoplasm. It catalyses the reaction UDP-N-acetyl-alpha-D-muramate + L-alanine + ATP = UDP-N-acetyl-alpha-D-muramoyl-L-alanine + ADP + phosphate + H(+). It participates in cell wall biogenesis; peptidoglycan biosynthesis. Its function is as follows. Cell wall formation. The chain is UDP-N-acetylmuramate--L-alanine ligase from Streptococcus pneumoniae (strain CGSP14).